A 197-amino-acid chain; its full sequence is Probable molybdenum cofactor guanylyltransferase (197 aa).

GTP contacts are provided by residues 12 to 14 (LAG), Lys-24, Asp-71, and Asp-103. Asp-103 is a Mg(2+) binding site.

This sequence belongs to the MobA family. Requires Mg(2+) as cofactor.

It localises to the cytoplasm. The enzyme catalyses Mo-molybdopterin + GTP + H(+) = Mo-molybdopterin guanine dinucleotide + diphosphate. Transfers a GMP moiety from GTP to Mo-molybdopterin (Mo-MPT) cofactor (Moco or molybdenum cofactor) to form Mo-molybdopterin guanine dinucleotide (Mo-MGD) cofactor. This Mycobacterium avium (strain 104) protein is Probable molybdenum cofactor guanylyltransferase.